Reading from the N-terminus, the 474-residue chain is Glycogen synthase (474 aa).

K15 is an ADP-alpha-D-glucose binding site.

The protein belongs to the glycosyltransferase 1 family. Bacterial/plant glycogen synthase subfamily.

The catalysed reaction is [(1-&gt;4)-alpha-D-glucosyl](n) + ADP-alpha-D-glucose = [(1-&gt;4)-alpha-D-glucosyl](n+1) + ADP + H(+). It functions in the pathway glycan biosynthesis; glycogen biosynthesis. Synthesizes alpha-1,4-glucan chains using ADP-glucose. This Chlamydia trachomatis serovar A (strain ATCC VR-571B / DSM 19440 / HAR-13) protein is Glycogen synthase.